A 489-amino-acid chain; its full sequence is Aklavinone 12-hydroxylase DnrF (489 aa).

FAD is bound by residues 17–18, glutamate 37, glutamine 121, and leucine 145; that span reads LG. Tyrosine 224 (proton acceptor) is an active-site residue. FAD is bound at residue aspartate 308. Glycine 317 serves as a coordination point for aklavinone. 2 disordered regions span residues 402–428 and 455–489; these read VAAE…RAPH and EGGA…PPAN. Residues 468-482 are compositionally biased toward low complexity; sequence RIWASASTSISSAAM.

This sequence belongs to the PheA/TfdB FAD monooxygenase family. Monomer. Requires FAD as cofactor.

The catalysed reaction is aklavinone + NADPH + O2 + H(+) = epsilon-rhodomycinone + NADP(+) + H2O. Its pathway is antibiotic biosynthesis; daunorubicin biosynthesis. The protein operates within antibiotic biosynthesis; carminomycin biosynthesis. It participates in antibiotic biosynthesis; rhodomycin biosynthesis. In terms of biological role, involved in the biosynthesis of the anthracyclines carminomycin, rhodomycin and daunorubicin (daunomycin) which are aromatic polyketide antibiotics that exhibit high cytotoxicity and are widely applied in the chemotherapy of a variety of cancers. Catalyzes the incorporation of a hydroxyl group at position C-11 of aklavinone, resulting in epsilon-rhodomycinone. It cannot accept substrates glycosylated at position C-7. It can also hydroxylate 11-deoxycarminomycinone and can use both NAD or NADP. This Streptomyces peucetius protein is Aklavinone 12-hydroxylase DnrF (dnrF).